A 206-amino-acid chain; its full sequence is Thiamine-phosphate synthase (206 aa).

4-amino-2-methyl-5-(diphosphooxymethyl)pyrimidine contacts are provided by residues glutamine 39–lysine 43 and asparagine 74. Mg(2+) contacts are provided by aspartate 75 and aspartate 94. Serine 112 contacts 4-amino-2-methyl-5-(diphosphooxymethyl)pyrimidine. Threonine 138 to threonine 140 is a binding site for 2-[(2R,5Z)-2-carboxy-4-methylthiazol-5(2H)-ylidene]ethyl phosphate. Lysine 141 is a binding site for 4-amino-2-methyl-5-(diphosphooxymethyl)pyrimidine. 2-[(2R,5Z)-2-carboxy-4-methylthiazol-5(2H)-ylidene]ethyl phosphate is bound by residues glycine 170 and isoleucine 190–serine 191.

It belongs to the thiamine-phosphate synthase family. Requires Mg(2+) as cofactor.

The enzyme catalyses 2-[(2R,5Z)-2-carboxy-4-methylthiazol-5(2H)-ylidene]ethyl phosphate + 4-amino-2-methyl-5-(diphosphooxymethyl)pyrimidine + 2 H(+) = thiamine phosphate + CO2 + diphosphate. The catalysed reaction is 2-(2-carboxy-4-methylthiazol-5-yl)ethyl phosphate + 4-amino-2-methyl-5-(diphosphooxymethyl)pyrimidine + 2 H(+) = thiamine phosphate + CO2 + diphosphate. It carries out the reaction 4-methyl-5-(2-phosphooxyethyl)-thiazole + 4-amino-2-methyl-5-(diphosphooxymethyl)pyrimidine + H(+) = thiamine phosphate + diphosphate. The protein operates within cofactor biosynthesis; thiamine diphosphate biosynthesis; thiamine phosphate from 4-amino-2-methyl-5-diphosphomethylpyrimidine and 4-methyl-5-(2-phosphoethyl)-thiazole: step 1/1. Functionally, condenses 4-methyl-5-(beta-hydroxyethyl)thiazole monophosphate (THZ-P) and 2-methyl-4-amino-5-hydroxymethyl pyrimidine pyrophosphate (HMP-PP) to form thiamine monophosphate (TMP). The protein is Thiamine-phosphate synthase of Oceanobacillus iheyensis (strain DSM 14371 / CIP 107618 / JCM 11309 / KCTC 3954 / HTE831).